The following is a 481-amino-acid chain: Solute carrier family 46 member 2 (481 aa).

At 1–37 (MGPEAAGPGRGAAPRLQVRTWIEPVVAATQVASSLYE) the chain is on the cytoplasmic side. A helical transmembrane segment spans residues 38–58 (AGLLLVVKASFGAGAGAGAGA). Residues 59 to 83 (ASNHSAGPPRGAPEDQQQRAISNFY) are Extracellular-facing. The N-linked (GlcNAc...) asparagine glycan is linked to N61. A helical transmembrane segment spans residues 84-104 (IVYNLVVGLTPLLSAYALGWL). The Cytoplasmic portion of the chain corresponds to 105 to 113 (SDRRHRKVA). A helical membrane pass occupies residues 114 to 134 (ICVALLGFLLSRVGLLLKVLL). At 135–143 (DWPVEVLYG) the chain is on the extracellular side. The chain crosses the membrane as a helical span at residues 144-164 (AAALNGLCGGFSAFWAGVMAL). The Cytoplasmic segment spans residues 165–179 (GSLGSSEGRRSVRLV). The helical transmembrane segment at 180 to 200 (LIDLILGLAGFCGSMASGHLF) threads the bilayer. Over 201–210 (KQVAGHSGQG) the chain is Extracellular. The helical transmembrane segment at 211 to 231 (LVLTACSVSCATFALLYSLLV) threads the bilayer. The Cytoplasmic portion of the chain corresponds to 232-286 (LKVPEAAAGSGQALSAGDSVAGTVGTYRTLDPDHSDKQSVQGLHPPSPGKAKPRR). A disordered region spans residues 263-282 (PDHSDKQSVQGLHPPSPGKA). The helical transmembrane segment at 287–307 (TIIALLFLGAIVYDLAVVGTV) threads the bilayer. The Extracellular segment spans residues 308–326 (DVMPLFVLREPLSWNQVQV). Residues 327 to 347 (GYGMAAGYTIFITSFLGVLVF) traverse the membrane as a helical segment. Topologically, residues 348-353 (SRCFQD) are cytoplasmic. Residues 354-374 (TTMIMIGMVSFGSGALLLAFV) traverse the membrane as a helical segment. Residues 375-376 (KE) are Extracellular-facing. The helical transmembrane segment at 377–397 (TYMFYIARAVMLFALIPITTI) threads the bilayer. Topologically, residues 398–412 (RSAMSKLIKGSSYGK) are cytoplasmic. A helical transmembrane segment spans residues 413-433 (VFVILQLSLTLTGVVTSTVYN). Over 434–446 (KIYQVTMEKFIGT) the chain is Extracellular. Residues 447–467 (CFALSSFLSFLAIIPIGIVAY) form a helical membrane-spanning segment. Over 468-481 (KQASWLQYGDVRET) the chain is Cytoplasmic.

It belongs to the major facilitator superfamily. SLC46A family. Post-translationally, glycosylated. Highly expressed by the epididymal duct epithelium.

It is found in the endosome membrane. Its subcellular location is the cell membrane. It catalyses the reaction N-acetyl-beta-D-glucosaminyl-(1-&gt;4)-1,6-anhydro-N-acetyl-beta-D-muramoyl-L-alanyl-gamma-D-glutamyl-meso-2,6-diaminopimeloyl-D-alanine(out) + n H(+)(out) = N-acetyl-beta-D-glucosaminyl-(1-&gt;4)-1,6-anhydro-N-acetyl-beta-D-muramoyl-L-alanyl-gamma-D-glutamyl-meso-2,6-diaminopimeloyl-D-alanine(in) + n H(+)(in). It carries out the reaction L-alanyl-gamma-D-glutamyl-meso-2,6-diaminopimelate(out) + n H(+)(out) = L-alanyl-gamma-D-glutamyl-meso-2,6-diaminopimelate(in) + n H(+)(in). The enzyme catalyses N-acetyl-D-muramoyl-L-alanyl-D-isoglutamine(out) + n H(+)(out) = N-acetyl-D-muramoyl-L-alanyl-D-isoglutamine(in) + n H(+)(in). The catalysed reaction is 2',3'-cGAMP(out) + n H(+)(out) = 2',3'-cGAMP(in) + n H(+)(in). It catalyses the reaction 3',3'-cGAMP(out) + n H(+)(out) = 3',3'-cGAMP(in) + n H(+)(in). Functionally, proton-coupled transporter that delivers pathogen-associated or danger-associated molecular patterns to cytosolic pattern recognition receptors as part of the innate immune response to microbes or tissue injury. Has selectivity toward muropeptides that contain the amino acid diaminopimelic acid (DAP-type peptidoglycan muropeptides) including Tri-DAP and tracheal toxin (TCT), common in Gram-negative bacteria and Gram-positive bacilli. In the context of immune recognition of skin microbiota, shuttles bacterial muropeptides across the endolysosomal membranes into the cytosol for recognition by NOD1, triggering MYD88-dependent secretion of IL1A and neutrophil recruitment in a pyroptosis-type inflammatory process. To a lesser extent and redundantly, transports muramyl dipeptides derived from most bacterial proteoglycans, eliciting NOD2 receptor activation and downstream inflammatory responses. Postulated to function as an importer of cyclic GMP-AMP dinucleotides (cGAMPs) in monocyte and macrophage cell lineages. Selectively imports cGAMPs derived from pathogenic bacteria such as 3'3'-cGAMP thus providing for differential immune recognition of pathogenic versus commensal bacteria. During tumorigenesis may transport extracellular tumor-derived 2'3'-cGAMP across the plasma membrane of M1-polarized macrophages to activate the anti-tumoral stimulator of interferon genes (STING) pathway. The transport mechanism, its electrogenicity and stoichiometry remain to be elucidated. The protein is Solute carrier family 46 member 2 of Canis lupus familiaris (Dog).